A 676-amino-acid polypeptide reads, in one-letter code: WD repeat-containing protein 48 (676 aa).

The residue at position 28 (tyrosine 28) is a Phosphotyrosine. WD repeat units lie at residues 28 to 67 (YNRN…QDPY), 73 to 112 (HHTD…CMST), 115 to 154 (THKD…ALTA), 166 to 205 (GNKD…KLMK), 208 to 247 (GHTD…CIAT), 250 to 289 (VHDE…IRVL), 292 to 334 (EEKA…NFRA), and 358 to 397 (KGGA…KVED). Lysine 214 is modified (N6-acetyllysine). Residue lysine 578 is modified to N6-acetyllysine. The interval 607 to 628 (LDNESQTTSSSNNEKPEQEKEE) is disordered. The span at 609 to 619 (NESQTTSSSNN) shows a compositional bias: low complexity. Threonine 613 carries the phosphothreonine modification.

It belongs to the WD repeat WDR48 family. As to quaternary structure, interacts with USP46. Interacts with USP1. Interacts with USP12. Component of the USP12-WDR20-WDR48 deubiquitinating complex. Component of the USP12-DMWD-WDR48 deubiquitinating complex. Interacts with PHLPP1. Interacts with RAD51AP1; the interaction is direct and promotes formation of a trimeric complex with RAD51 via RAD51AP1. Interacts with ATAD5; the interaction regulates USP1-mediated PCNA deubiquitination. Interacts with RAD51; the interaction is enhanced under replication stress. Interacts with ITCH; the interaction is more efficient when both USP12 and WDR48/UAF1 are involved and may facilitate recruitment of the USP12 deubiquitinating complex to Notch.

The protein localises to the nucleus. It is found in the cytoplasm. The protein resides in the lysosome. It localises to the late endosome. Regulator of deubiquitinating complexes, which acts as a strong activator of USP1, USP12 and USP46. Enhances the USP1-mediated deubiquitination of FANCD2; USP1 being almost inactive by itself. Activates deubiquitination by increasing the catalytic turnover without increasing the affinity of deubiquitinating enzymes for the substrate. Also activates deubiquitinating activity of complexes containing USP12. Docks at the distal end of the USP12 fingers domain and induces a cascade of structural changes leading to the activation of the enzyme. Together with RAD51AP1, promotes DNA repair by stimulating RAD51-mediated homologous recombination. Binds single-stranded DNA (ssDNA) and double-stranded DNA (dsDNA). DNA-binding is required both for USP1-mediated deubiquitination of FANCD2 and stimulation of RAD51-mediated homologous recombination: both WDR48/UAF1 and RAD51AP1 have coordinated role in DNA-binding during these processes. Together with ATAD5 and by regulating USP1 activity, has a role in PCNA-mediated translesion synthesis (TLS) by deubiquitinating monoubiquitinated PCNA. Together with ATAD5, has a role in recruiting RAD51 to stalled forks during replication stress. This Mus musculus (Mouse) protein is WD repeat-containing protein 48 (Wdr48).